The chain runs to 260 residues: Thiazole synthase (260 aa).

The active-site Schiff-base intermediate with DXP is lysine 96. 1-deoxy-D-xylulose 5-phosphate-binding positions include glycine 157, 184 to 185 (AG), and 206 to 207 (NT).

The protein belongs to the ThiG family. As to quaternary structure, homotetramer. Forms heterodimers with either ThiH or ThiS.

Its subcellular location is the cytoplasm. The catalysed reaction is [ThiS sulfur-carrier protein]-C-terminal-Gly-aminoethanethioate + 2-iminoacetate + 1-deoxy-D-xylulose 5-phosphate = [ThiS sulfur-carrier protein]-C-terminal Gly-Gly + 2-[(2R,5Z)-2-carboxy-4-methylthiazol-5(2H)-ylidene]ethyl phosphate + 2 H2O + H(+). The protein operates within cofactor biosynthesis; thiamine diphosphate biosynthesis. Catalyzes the rearrangement of 1-deoxy-D-xylulose 5-phosphate (DXP) to produce the thiazole phosphate moiety of thiamine. Sulfur is provided by the thiocarboxylate moiety of the carrier protein ThiS. In vitro, sulfur can be provided by H(2)S. This chain is Thiazole synthase, found in Bradyrhizobium diazoefficiens (strain JCM 10833 / BCRC 13528 / IAM 13628 / NBRC 14792 / USDA 110).